A 332-amino-acid polypeptide reads, in one-letter code: Glycerol-3-phosphate dehydrogenase [NAD(P)+] (332 aa).

3 residues coordinate NADPH: Trp-11, Arg-30, and Lys-108. Residues Lys-108, Gly-137, and Ser-139 each coordinate sn-glycerol 3-phosphate. Position 141 (Ala-141) interacts with NADPH. Residues Lys-192, Asp-245, Ser-255, Arg-256, and Asn-257 each coordinate sn-glycerol 3-phosphate. Lys-192 (proton acceptor) is an active-site residue. An NADPH-binding site is contributed by Arg-256. Positions 280 and 282 each coordinate NADPH.

This sequence belongs to the NAD-dependent glycerol-3-phosphate dehydrogenase family.

The protein resides in the cytoplasm. It catalyses the reaction sn-glycerol 3-phosphate + NAD(+) = dihydroxyacetone phosphate + NADH + H(+). The catalysed reaction is sn-glycerol 3-phosphate + NADP(+) = dihydroxyacetone phosphate + NADPH + H(+). The protein operates within membrane lipid metabolism; glycerophospholipid metabolism. Functionally, catalyzes the reduction of the glycolytic intermediate dihydroxyacetone phosphate (DHAP) to sn-glycerol 3-phosphate (G3P), the key precursor for phospholipid synthesis. The sequence is that of Glycerol-3-phosphate dehydrogenase [NAD(P)+] from Burkholderia lata (strain ATCC 17760 / DSM 23089 / LMG 22485 / NCIMB 9086 / R18194 / 383).